The primary structure comprises 502 residues: N-sulphoglucosamine sulphohydrolase (502 aa).

The first 20 residues, Met1–Ala20, serve as a signal peptide directing secretion. Ca(2+)-binding residues include Asp31 and Asp32. Residue Asn41 is glycosylated (N-linked (GlcNAc...) asparagine). Ca(2+) is bound at residue Cys70. Catalysis depends on Cys70, which acts as the Nucleophile. 3-oxoalanine (Cys) is present on Cys70. Residues Asn142 and Asn151 are each glycosylated (N-linked (GlcNAc...) asparagine). A disulfide bond links Cys183 and Cys194. N-linked (GlcNAc...) asparagine glycosylation is present at Asn264. Asp273 and Asn274 together coordinate Ca(2+). N-linked (GlcNAc...) asparagine glycosylation is present at Asn413. A disulfide bond links Cys481 and Cys495.

It belongs to the sulfatase family. The cofactor is Ca(2+). In terms of processing, the conversion to 3-oxoalanine (also known as C-formylglycine, FGly), of a serine or cysteine residue in prokaryotes and of a cysteine residue in eukaryotes, is critical for catalytic activity.

Its subcellular location is the lysosome. It carries out the reaction N-sulfo-D-glucosamine + H2O = D-glucosamine + sulfate. Functionally, catalyzes a step in lysosomal heparan sulfate degradation. This chain is N-sulphoglucosamine sulphohydrolase (SGSH), found in Homo sapiens (Human).